The following is a 396-amino-acid chain: MAKGKFERTKPHVNVGTIGHVDHGKTTLTAAIATVLSKKFGGEAKGYDQIDNAPEEKARGITINTSHVEYETATRHYAHVDCPGHADYVKNMITGAAQMDGAILVCSAADGPMPQTREHILLARQVGVPYIIVFLNKCDMVDDEELLELVEMEVRELLDKYDFPGDDTPIIRGSAKLALEGDQSDKGEPAILRLAEALDTYIPTPERAVDGAFLMPVEDVFSISGRGTVVTGRVERGIIKVGEEIEIVGIRDTQKTTVTGVEMFRKLLDQGQAGDNVGLLLRGTKREDVERGQVLCKPGSIKPHTHFTAEVYVLSKDEGGRHTPFFNNYRPQFYFRTTDVTGSIELPADKEMVMPGDNVSITVKLINPIAMEEGLRFAIREGGRTVGAGVVAKIIA.

The tr-type G domain maps to 10-206 (KPHVNVGTIG…ALDTYIPTPE (197 aa)). Residues 19–26 (GHVDHGKT) form a G1 region. 19–26 (GHVDHGKT) provides a ligand contact to GTP. Threonine 26 serves as a coordination point for Mg(2+). Residues 60-64 (GITIN) form a G2 region. The tract at residues 81–84 (DCPG) is G3. GTP is bound by residues 81–85 (DCPGH) and 136–139 (NKCD). The tract at residues 136–139 (NKCD) is G4. The G5 stretch occupies residues 174 to 176 (SAK).

It belongs to the TRAFAC class translation factor GTPase superfamily. Classic translation factor GTPase family. EF-Tu/EF-1A subfamily. In terms of assembly, monomer.

Its subcellular location is the cytoplasm. It catalyses the reaction GTP + H2O = GDP + phosphate + H(+). GTP hydrolase that promotes the GTP-dependent binding of aminoacyl-tRNA to the A-site of ribosomes during protein biosynthesis. The chain is Elongation factor Tu 2 from Acidovorax sp. (strain JS42).